Here is a 199-residue protein sequence, read N- to C-terminus: Probable thymidylate kinase (199 aa).

7–14 (GLDGSGKT) is an ATP binding site.

The protein belongs to the thymidylate kinase family.

It carries out the reaction dTMP + ATP = dTDP + ADP. This Halobacterium salinarum (strain ATCC 29341 / DSM 671 / R1) protein is Probable thymidylate kinase.